Reading from the N-terminus, the 220-residue chain is Artemin (220 aa).

Positions 1–39 (MELGLGGLSTLSHCPWPRQQPALWPTLAALALLSSVAEA) are cleaved as a signal peptide. Positions 40–107 (SLGSAPRSPA…ALPRGGRAAR (68 aa)) are excised as a propeptide. The interval 41–121 (LGSAPRSPAP…GSRARAAGAR (81 aa)) is disordered. Composition is skewed to pro residues over residues 47 to 58 (SPAPREGPPPVL) and 81 to 98 (PPPQ…PPSA). The segment covering 99 to 121 (LPRGGRAARAGGPGSRARAAGAR) has biased composition (low complexity). Intrachain disulfides connect Cys123/Cys188, Cys150/Cys216, and Cys154/Cys218. Residue Asn202 is glycosylated (N-linked (GlcNAc...) asparagine).

This sequence belongs to the TGF-beta family. GDNF subfamily. Homodimer; disulfide-linked. Interacts with GFRA3 coreceptor and RET: forms a 2:2:2 ternary complex composed of ARTN ligand, GFRA3 and RET receptor. As to expression, ubiquitous. Expressed at high levels in peripheral tissues including prostate, placenta, pancreas, heart, kidney, pituitary gland, lung and testis. Expressed at low levels in the brain.

It localises to the secreted. In terms of biological role, growth factor that supports the survival of sensory and sympathetic peripheral neurons in culture and also supports the survival of dopaminergic neurons of the ventral mid-brain. Acts by binding to its coreceptor, GFRA3, leading to autophosphorylation and activation of the RET receptor. Strong attractant of gut hematopoietic cells thus promoting the formation Peyer's patch-like structures, a major component of the gut-associated lymphoid tissue. The chain is Artemin from Homo sapiens (Human).